Consider the following 184-residue polypeptide: GTP cyclohydrolase 1 (184 aa).

Zn(2+) is bound by residues C75, H78, and C146.

It belongs to the GTP cyclohydrolase I family. In terms of assembly, homomer.

It catalyses the reaction GTP + H2O = 7,8-dihydroneopterin 3'-triphosphate + formate + H(+). Its pathway is cofactor biosynthesis; 7,8-dihydroneopterin triphosphate biosynthesis; 7,8-dihydroneopterin triphosphate from GTP: step 1/1. This chain is GTP cyclohydrolase 1, found in Finegoldia magna (strain ATCC 29328 / DSM 20472 / WAL 2508) (Peptostreptococcus magnus).